Here is a 309-residue protein sequence, read N- to C-terminus: Serine/threonine-protein phosphatase 2A catalytic subunit alpha isoform (309 aa).

Residues Asp57, His59, Asp85, and Asn117 each coordinate Mn(2+). Zn(2+)-binding residues include Asp57, His59, and Asp85. Residues Asp85 and Asn117 each contribute to the Fe(3+) site. His118 (proton donor) is an active-site residue. Positions 167 and 241 each coordinate Mn(2+). Fe(3+) is bound by residues His167 and His241. At Tyr307 the chain carries Phosphotyrosine. Leu309 is subject to Leucine methyl ester.

It belongs to the PPP phosphatase family. PP-1 subfamily. As to quaternary structure, PP2A consists of a common heterodimeric core enzyme composed of PPP2CA, a 36 kDa catalytic subunit (subunit C), and PPP2R1A, a 65 kDa constant regulatory subunit (PR65 or subunit A), that associates with a variety of regulatory subunits. Proteins that associate with the core dimer include three families of regulatory subunits B (the R2/B/PR55/B55, R3/B''/PR72/PR130/PR59 and R5/B'/B56 families), the 48 kDa variable regulatory subunit, viral proteins, and cell signaling molecules. Interacts with the PP2A A subunit PPP2R1A. Interacts with the regulatory subunit PPP2R2A. Interacts (via C-terminus) with PTPA. Interacts with NXN; the interaction is direct. Interacts with KCTD20. Interacts with BTBD10. Interacts with SGO1 and SGO2. Interacts with RAF1. Interaction with IGBP1 protects unassembled PPP2CA from degradative ubiquitination. Interacts with GSK3B (via C2 domain). Interacts with MFHAS1; retains PPP2CA into the cytoplasm and excludes it from the nucleus. Interacts with PABIR1/FAM122A. Interacts with ADCY8; interaction is phosphatase activity-dependent; antagonizes interaction between ADCY8 and calmodulin. Interacts with CRTC3 (when phosphorylated at 'Ser-391'). Interacts with SPRY2; the interaction is inhibited by TESK1 interaction with SPRY2, possibly by vesicular sequestration of SPRY2. Interacts with TRAF3IP3. Interacts with AMBRA1 (via PxP motifs); enhancing interaction between PPP2CA and MYC or FOXO3. Forms a complex with AMBRA1 and BECN1; AMBRA1 and BECN1 components of the complex regulate MYC stability via different pathways. Part of the core of STRIPAK complexes composed of PP2A catalytic and scaffolding subunits, the striatins (PP2A regulatory subunits), the striatin-associated proteins MOB4, STRIP1 and STRIP2, PDCD10 and members of the STE20 kinases, such as STK24 and STK26. Phosphatase component of the Integrator-PP2A (INTAC) complex, composed of the Integrator core complex and protein phosphatase 2A subunits PPP2CA and PPP2R1A. Requires Mn(2+) as cofactor. The cofactor is Fe(3+). It depends on Zn(2+) as a cofactor. In terms of processing, reversibly methyl esterified on Leu-309 by leucine carboxyl methyltransferase 1 (Lcmt1) and protein phosphatase methylesterase 1 (Ppme1). Carboxyl methylation influences the affinity of the catalytic subunit for the different regulatory subunits, thereby modulating the PP2A holoenzyme's substrate specificity, enzyme activity and cellular localization. Post-translationally, phosphorylation of either threonine (by autophosphorylation-activated protein kinase) or tyrosine results in inactivation of the phosphatase. Auto-dephosphorylation has been suggested as a mechanism for reactivation. Polyubiquitinated, leading to its degradation by the proteasome.

Its subcellular location is the cytoplasm. It localises to the nucleus. It is found in the chromosome. The protein localises to the centromere. The protein resides in the cytoskeleton. Its subcellular location is the spindle pole. It catalyses the reaction O-phospho-L-seryl-[protein] + H2O = L-seryl-[protein] + phosphate. The catalysed reaction is O-phospho-L-threonyl-[protein] + H2O = L-threonyl-[protein] + phosphate. Its activity is regulated as follows. Inhibited by the interaction between PPP2R2A and ARPP19; this inhibition is enhanced when ARPP19 is phosphorylated. Inhibited by the interaction between PPP2R2A and PABIR1/FAM122A. Catalytic subunit of protein phosphatase 2A (PP2A), a serine/threonine phosphatase involved in the regulation of a wide variety of enzymes, signal transduction pathways, and cellular events. PP2A is the major phosphatase for microtubule-associated proteins (MAPs). PP2A can modulate the activity of phosphorylase B kinase casein kinase 2, mitogen-stimulated S6 kinase, and MAP-2 kinase. Cooperates with SGO2 to protect centromeric cohesin from separase-mediated cleavage in oocytes specifically during meiosis I. Can dephosphorylate various proteins, such as AXIN1, p53/TP53, PIM3, WEE1. Activates RAF1 by dephosphorylating it at 'Ser-259'. Mediates dephosphorylation of WEE1, preventing its ubiquitin-mediated proteolysis, increasing WEE1 protein levels, and promoting the G2/M checkpoint. Mediates dephosphorylation of MYC; promoting its ubiquitin-mediated proteolysis: interaction with AMBRA1 enhances interaction between PPP2CA and MYC. Mediates dephosphorylation of FOXO3; promoting its stabilization: interaction with AMBRA1 enhances interaction between PPP2CA and FOXO3. Catalyzes dephosphorylation of the pyrin domain of NLRP3, promoting assembly of the NLRP3 inflammasome. Together with RACK1 adapter, mediates dephosphorylation of AKT1 at 'Ser-473', preventing AKT1 activation and AKT-mTOR signaling pathway. Dephosphorylation of AKT1 is essential for regulatory T-cells (Treg) homeostasis and stability. Catalyzes dephosphorylation of PIM3, promotinh PIM3 ubiquitination and proteasomal degradation. Part of the striatin-interacting phosphatase and kinase (STRIPAK) complexes. STRIPAK complexes have critical roles in protein (de)phosphorylation and are regulators of multiple signaling pathways including Hippo, MAPK, nuclear receptor and cytoskeleton remodeling. Different types of STRIPAK complexes are involved in a variety of biological processes such as cell growth, differentiation, apoptosis, metabolism and immune regulation. Key mediator of a quality checkpoint during transcription elongation as part of the Integrator-PP2A (INTAC) complex. The INTAC complex drives premature transcription termination of transcripts that are unfavorably configured for transcriptional elongation: within the INTAC complex, PPP2CA catalyzes dephosphorylation of the C-terminal domain (CTD) of Pol II subunit POLR2A/RPB1 and SUPT5H/SPT5, thereby preventing transcriptional elongation. This is Serine/threonine-protein phosphatase 2A catalytic subunit alpha isoform (Ppp2ca) from Rattus norvegicus (Rat).